A 634-amino-acid chain; its full sequence is TATA box-binding protein-associated factor RNA polymerase I subunit B (634 aa).

Residues 19 to 51 (LVCEYCGHGSEYAEDDADNGFFTCRQCSAIHTS) form an RRN7-type zinc finger. Zn(2+) is bound by residues cysteine 21, cysteine 24, cysteine 42, and cysteine 45. The segment at 51-80 (STQNTATNPFDFPMTPAHLSAHRRPTQPTP) is B-reader. Positions 56–117 (ATNPFDFPMT…EPRDFATGAN (62 aa)) are disordered. Positions 77–87 (QPTPTPKPFPA) are enriched in pro residues. The tract at residues 81-83 (TPK) is B-linker. The interval 84 to 281 (PFPAPRGAAT…DKLLGSSLND (198 aa)) is N-terminal cyclin fold. The segment covering 88–98 (PRGAATGAAAP) has biased composition (low complexity). Residues 282–284 (CPL) form a C-terminal cyclin fold region.

It belongs to the RRN7/TAF1B family.

The protein resides in the nucleus. It is found in the nucleolus. Its function is as follows. Component of RNA polymerase I core factor complex that acts as a GTF2B/TFIIB-like factor and plays a key role in multiple steps during transcription initiation such as pre-initiation complex (PIC) assembly and postpolymerase recruitment events in polymerase I (Pol I) transcription. Binds rDNA promoters and plays a role in Pol I recruitment. The protein is TATA box-binding protein-associated factor RNA polymerase I subunit B of Oryza sativa subsp. indica (Rice).